The following is a 1161-amino-acid chain: Lethal(2) giant larvae protein (1161 aa).

A phospho-regulated basic and hydrophobic (PRBH) motif region spans residues 15–86 (DRHRLQKDLF…NNSASELNVQ (72 aa)). WD repeat units follow at residues 39–72 (SALA…LYGQ), 82–128 (ELNV…DGKL), 131–167 (VSSL…EPVI), 189–223 (SIRQ…QRAY), 231–263 (SVGL…PEPP), 278–320 (SINR…GHKV), 328–358 (VIDF…AYDL), and 380–464 (TCNY…YNFK). Residues serine 473 and serine 484 each carry the phosphoserine modification. 2 WD repeats span residues 513–594 (KKIA…SGVL) and 603–664 (TCMA…LRES). Position 679 is a phosphoserine (serine 679). WD repeat units lie at residues 708–778 (VRCL…KEIQ), 787–832 (GISI…LKPI), 837–927 (LTAN…LNAA), and 941–964 (CFTN…ALAT). A phosphoserine mark is found at serine 808, serine 869, serine 876, serine 887, serine 889, and serine 893. Serine 1013 carries the post-translational modification Phosphoserine. Positions 1141-1161 (EKTNGDNKIGTPKTAPEESQF) are disordered.

Belongs to the WD repeat L(2)GL family. In terms of assembly, may form multimeric complexes. Interacts with mahj. Interacts with aPKC; leading to phosphorylation. Interacts with ball. Post-translationally, phosphorylated by aPKC which lowers lipid affinity and promotes dissociation from the cell cortex. In developing oocytes, aPKC-mediated phosphorylation restricts activity to the oocyte posterior and is required for oocyte polarity formation. As to expression, expressed in the epithelial cells of the digestive tract and in gonads.

Its subcellular location is the cytoplasm. It localises to the cell cortex. Its function is as follows. Essential for the development of polarized epithelia, for cell polarity associated with asymmetric cell division of neuroblasts during development, and for oocyte polarity formation. Promotes the formation of actin-rich projections at the oocyte cortex and the posterior enrichment of par-1 which is required for oocyte polarization. Regulates the localization of axis-specifying morphogens such as stau and grk. Has an essential role in control of cell proliferation and differentiation during development and could act as a tumor suppressor. In terms of biological role, has an accessory function in control of cell proliferation and differentiation during development. The protein is Lethal(2) giant larvae protein (l(2)gl) of Drosophila melanogaster (Fruit fly).